Consider the following 299-residue polypeptide: Pyridoxal 5'-phosphate synthase subunit PdxS (299 aa).

D-ribose 5-phosphate is bound at residue aspartate 24. Lysine 81 (schiff-base intermediate with D-ribose 5-phosphate) is an active-site residue. Glycine 153 contributes to the D-ribose 5-phosphate binding site. Arginine 165 contacts D-glyceraldehyde 3-phosphate. D-ribose 5-phosphate-binding positions include glycine 219 and 240-241 (GS).

Belongs to the PdxS/SNZ family. As to quaternary structure, in the presence of PdxT, forms a dodecamer of heterodimers.

The catalysed reaction is aldehydo-D-ribose 5-phosphate + D-glyceraldehyde 3-phosphate + L-glutamine = pyridoxal 5'-phosphate + L-glutamate + phosphate + 3 H2O + H(+). It functions in the pathway cofactor biosynthesis; pyridoxal 5'-phosphate biosynthesis. Catalyzes the formation of pyridoxal 5'-phosphate from ribose 5-phosphate (RBP), glyceraldehyde 3-phosphate (G3P) and ammonia. The ammonia is provided by the PdxT subunit. Can also use ribulose 5-phosphate and dihydroxyacetone phosphate as substrates, resulting from enzyme-catalyzed isomerization of RBP and G3P, respectively. The polypeptide is Pyridoxal 5'-phosphate synthase subunit PdxS (Methanococcus maripaludis (strain DSM 14266 / JCM 13030 / NBRC 101832 / S2 / LL)).